The primary structure comprises 109 residues: FK506-binding protein (109 aa).

Residues Gly-20–Tyr-108 enclose the PPIase FKBP-type domain.

Belongs to the FKBP-type PPIase family.

The catalysed reaction is [protein]-peptidylproline (omega=180) = [protein]-peptidylproline (omega=0). Its activity is regulated as follows. Inhibited by FK506. In terms of biological role, PPIases accelerate the folding of proteins. In Neisseria meningitidis serogroup A / serotype 4A (strain DSM 15465 / Z2491), this protein is FK506-binding protein (fbp).